The chain runs to 364 residues: tRNA N6-adenosine threonylcarbamoyltransferase (364 aa).

Fe cation-binding residues include His115 and His119. Residues 137 to 141 (LVSGG), Asp170, Gly183, and Asn288 contribute to the substrate site. Asp316 contacts Fe cation. A disordered region spans residues 341-364 (PRSRWPLDEKSAPLIGTGRRGTKA).

It belongs to the KAE1 / TsaD family. Fe(2+) serves as cofactor.

The protein localises to the cytoplasm. The catalysed reaction is L-threonylcarbamoyladenylate + adenosine(37) in tRNA = N(6)-L-threonylcarbamoyladenosine(37) in tRNA + AMP + H(+). In terms of biological role, required for the formation of a threonylcarbamoyl group on adenosine at position 37 (t(6)A37) in tRNAs that read codons beginning with adenine. Is involved in the transfer of the threonylcarbamoyl moiety of threonylcarbamoyl-AMP (TC-AMP) to the N6 group of A37, together with TsaE and TsaB. TsaD likely plays a direct catalytic role in this reaction. This is tRNA N6-adenosine threonylcarbamoyltransferase from Bartonella henselae (strain ATCC 49882 / DSM 28221 / CCUG 30454 / Houston 1) (Rochalimaea henselae).